The primary structure comprises 344 residues: uncharacterized protein (344 aa).

The N-terminal stretch at 1-28 (MNKKSLNIVATLGILLVLAFSGCVDQSA) is a signal peptide.

The protein belongs to the bacterial solute-binding protein 1 family. WtpA subfamily.

This is an uncharacterized protein from Methanococcus maripaludis (strain C7 / ATCC BAA-1331).